Here is a 479-residue protein sequence, read N- to C-terminus: Cardiolipin synthase A (479 aa).

A run of 2 helical transmembrane segments spans residues 8 to 28 (LLAYFIATLHFLGTLAAIHAV) and 38 to 58 (IAWALSLMFMPYLTLIPYLIF). 2 consecutive PLD phosphodiesterase domains span residues 218 to 245 (VNFRNHRKIVVVDGITGFVGGHNVGDEY) and 392 to 419 (TPGFLHQKVVLVDSEISAIGSANMDNRS). Catalysis depends on residues H223, K225, D230, H397, K399, and D404.

It belongs to the phospholipase D family. Cardiolipin synthase subfamily. ClsA sub-subfamily.

It is found in the cell inner membrane. It carries out the reaction 2 a 1,2-diacyl-sn-glycero-3-phospho-(1'-sn-glycerol) = a cardiolipin + glycerol. Functionally, catalyzes the reversible phosphatidyl group transfer from one phosphatidylglycerol molecule to another to form cardiolipin (CL) (diphosphatidylglycerol) and glycerol. In Pseudomonas fluorescens (strain SBW25), this protein is Cardiolipin synthase A.